Reading from the N-terminus, the 184-residue chain is uncharacterized protein (184 aa).

The Nudix hydrolase domain maps to 36 to 164 (LRHRATYIVV…TPDSLKALAL (129 aa)). Positions 73–95 (GGVVQADEQLLESARREAEEELG) match the Nudix box motif. Residues Glu-89 and Glu-93 each contribute to the Mg(2+) site.

Belongs to the Nudix hydrolase family. Mg(2+) serves as cofactor.

This is an uncharacterized protein from Salmonella typhi.